The following is a 209-amino-acid chain: ATP-dependent Clp protease proteolytic subunit (209 aa).

S106 functions as the Nucleophile in the catalytic mechanism. The active site involves H131.

It belongs to the peptidase S14 family. In terms of assembly, fourteen ClpP subunits assemble into 2 heptameric rings which stack back to back to give a disk-like structure with a central cavity, resembling the structure of eukaryotic proteasomes.

Its subcellular location is the cytoplasm. The enzyme catalyses Hydrolysis of proteins to small peptides in the presence of ATP and magnesium. alpha-casein is the usual test substrate. In the absence of ATP, only oligopeptides shorter than five residues are hydrolyzed (such as succinyl-Leu-Tyr-|-NHMec, and Leu-Tyr-Leu-|-Tyr-Trp, in which cleavage of the -Tyr-|-Leu- and -Tyr-|-Trp bonds also occurs).. Its function is as follows. Cleaves peptides in various proteins in a process that requires ATP hydrolysis. Has a chymotrypsin-like activity. Plays a major role in the degradation of misfolded proteins. The protein is ATP-dependent Clp protease proteolytic subunit of Caulobacter vibrioides (strain ATCC 19089 / CIP 103742 / CB 15) (Caulobacter crescentus).